Consider the following 123-residue polypeptide: Histone H2B (123 aa).

The disordered stretch occupies residues 1–31 (MPPKTSGKAAKKAGKAQKNITKNDKKKKRKR). N-methylproline; partial is present on proline 2. Lysine 44 carries the post-translational modification N6-succinyllysine. An O-linked (GlcNAc) serine glycan is attached at serine 110. An N6-succinyllysine mark is found at lysine 114 and lysine 118. A Glycyl lysine isopeptide (Lys-Gly) (interchain with G-Cter in ubiquitin) cross-link involves residue lysine 118.

It belongs to the histone H2B family. As to quaternary structure, the nucleosome is a histone octamer containing two molecules each of H2A, H2B, H3 and H4 assembled in one H3-H4 heterotetramer and two H2A-H2B heterodimers. The octamer wraps approximately 147 bp of DNA. In terms of processing, phosphorylated by the catalytic component of the Dbf4-dependent kinase (DDK) complex Cdc7. Monoubiquitination of Lys-118 by Bre1 gives a specific tag for epigenetic transcriptional activation and is also prerequisite for histone H3 'Lys-4' and 'Lys-79' methylation. Deubiquitination of Lys-118 by the SAGA complex is involved in activating transcription of a large subset of genes. Post-translationally, methylation at Pro-2 increases upon heat shock. In terms of processing, glcNAcylation at Ser-110 promotes monoubiquitination of Lys-118. It fluctuates in response to extracellular glucose, and associates with transcribed genes.

The protein resides in the nucleus. It is found in the chromosome. In terms of biological role, core component of nucleosome. Nucleosomes wrap and compact DNA into chromatin, limiting DNA accessibility to the cellular machineries which require DNA as a template. Histones thereby play a central role in transcription regulation, DNA repair, DNA replication and chromosomal stability. DNA accessibility is regulated via a complex set of post-translational modifications of histones, also called histone code, and nucleosome remodeling. This is Histone H2B (His2B) from Drosophila sechellia (Fruit fly).